Here is a 181-residue protein sequence, read N- to C-terminus: Translation initiation factor IF-3 (181 aa).

Belongs to the IF-3 family. In terms of assembly, monomer.

It localises to the cytoplasm. Its function is as follows. IF-3 binds to the 30S ribosomal subunit and shifts the equilibrium between 70S ribosomes and their 50S and 30S subunits in favor of the free subunits, thus enhancing the availability of 30S subunits on which protein synthesis initiation begins. The sequence is that of Translation initiation factor IF-3 from Mycoplasma capricolum subsp. capricolum (strain California kid / ATCC 27343 / NCTC 10154).